The primary structure comprises 243 residues: Small ribosomal subunit protein eS4 (243 aa).

The S4 RNA-binding domain occupies Ile43–Asn105.

Belongs to the eukaryotic ribosomal protein eS4 family. In terms of assembly, part of the 30S ribosomal subunit.

The sequence is that of Small ribosomal subunit protein eS4 from Pyrococcus furiosus (strain ATCC 43587 / DSM 3638 / JCM 8422 / Vc1).